The primary structure comprises 151 residues: 3-dehydroquinate dehydratase (151 aa).

Residue Tyr-24 is the Proton acceptor of the active site. Residues Asn-76, His-82, and Asp-89 each contribute to the substrate site. The active-site Proton donor is the His-102. Residues 103–104 (VS) and Arg-113 each bind substrate.

It belongs to the type-II 3-dehydroquinase family. Homododecamer.

It catalyses the reaction 3-dehydroquinate = 3-dehydroshikimate + H2O. It functions in the pathway metabolic intermediate biosynthesis; chorismate biosynthesis; chorismate from D-erythrose 4-phosphate and phosphoenolpyruvate: step 3/7. In terms of biological role, catalyzes a trans-dehydration via an enolate intermediate. The protein is 3-dehydroquinate dehydratase of Rhodopseudomonas palustris (strain HaA2).